The chain runs to 111 residues: Nucleoid-associated protein Cpha266_1171 (111 aa).

This sequence belongs to the YbaB/EbfC family. In terms of assembly, homodimer.

The protein resides in the cytoplasm. It is found in the nucleoid. Its function is as follows. Binds to DNA and alters its conformation. May be involved in regulation of gene expression, nucleoid organization and DNA protection. The sequence is that of Nucleoid-associated protein Cpha266_1171 from Chlorobium phaeobacteroides (strain DSM 266 / SMG 266 / 2430).